A 306-amino-acid chain; its full sequence is D-alanine--D-alanine ligase (306 aa).

The 203-residue stretch at 101-303 folds into the ATP-grasp domain; it reads KLVWQALGLP…FSQLVARILM (203 aa). ATP is bound at residue 134 to 189; that stretch reads VAKLGLPLIVKPSHEGSSVGMSKVDHASELQKALVEAFQHDSDVLIEKWLSGPEFT. Mg(2+) is bound by residues D257, E270, and N272.

The protein belongs to the D-alanine--D-alanine ligase family. Mg(2+) serves as cofactor. Mn(2+) is required as a cofactor.

The protein resides in the cytoplasm. It carries out the reaction 2 D-alanine + ATP = D-alanyl-D-alanine + ADP + phosphate + H(+). It functions in the pathway cell wall biogenesis; peptidoglycan biosynthesis. Functionally, cell wall formation. The chain is D-alanine--D-alanine ligase from Yersinia pseudotuberculosis serotype O:1b (strain IP 31758).